A 111-amino-acid chain; its full sequence is Glutaredoxin-C2 (111 aa).

Residues 3-103 enclose the Glutaredoxin domain; it reads MQKAKEIVNS…PLLTEAGAIA (101 aa). C23 and C26 are joined by a disulfide.

The protein belongs to the glutaredoxin family. CPYC subfamily.

Its subcellular location is the cytoplasm. Its function is as follows. Has a glutathione-disulfide oxidoreductase activity in the presence of NADPH and glutathione reductase. Reduces low molecular weight disulfides and proteins. The chain is Glutaredoxin-C2 (GRXC2) from Arabidopsis thaliana (Mouse-ear cress).